Here is a 540-residue protein sequence, read N- to C-terminus: uncharacterized protein (540 aa).

2 ABC transporter domains span residues 2–252 (IAVN…KLSQ) and 320–537 (LRVE…LTEL). Residue 34 to 41 (GANGAGKS) participates in ATP binding.

It belongs to the ABC transporter superfamily.

This is an uncharacterized protein from Bacillus subtilis (strain 168).